A 40-amino-acid polypeptide reads, in one-letter code: Beta-glucosidase 1 (40 aa).

It catalyses the reaction Hydrolysis of terminal, non-reducing beta-D-glucosyl residues with release of beta-D-glucose.. This Passalora fulva (Tomato leaf mold) protein is Beta-glucosidase 1.